The sequence spans 170 residues: Probable calcium-binding protein CML27 (170 aa).

An N-acetylalanine modification is found at A2. 4 EF-hand domains span residues 19 to 54 (ANPEELKKVFDQFDSNGDGKISVLELGGVFKAMGTS), 55 to 85 (YTETELNRVLEEVDTDRDGYINLDEFSTLCR), 88 to 123 (SSAAEIRDAFDLYDQDKNGLISASELHQVLNRLGMS), and 136 to 159 (VDADGDGNVNFEEFQKMMTSSSLL). Ca(2+)-binding residues include D32, N34, D36, K38, E43, D68, D70, D72, Y74, E79, D101, D103, N105, E112, D137, D139, D141, N143, and E148.

Functionally, potential calcium sensor. The chain is Probable calcium-binding protein CML27 (CML27) from Arabidopsis thaliana (Mouse-ear cress).